The sequence spans 656 residues: Broad substrate specificity ATP-binding cassette transporter ABCG2 (656 aa).

Residues 1 to 25 (MSSNSYQVSIPMSKRNTNGLPGSSS) form a disordered region. Residues 1–394 (MSSNSYQVSI…SFKNLLGNPQ (394 aa)) lie on the Cytoplasmic side of the membrane. In terms of domain architecture, ABC transporter spans 37-286 (LSFHDICYRV…FASIGYNCEP (250 aa)). ATP-binding positions include 80–87 (GPTGGGKS), 184–190 (RGVSGGE), Glu-211, and His-243. The ABC transmembrane type-2 domain maps to 390–652 (LGNPQASVAQ…TIAYLKLLLL (263 aa)). The chain crosses the membrane as a helical span at residues 395-415 (ASVAQIIVTIILGLVIGAIFY). Topologically, residues 416 to 429 (DLKNDPSGIQNRAG) are extracellular. Residues 430 to 450 (VLFFLTTNQCFSSVSAVELLV) form a helical membrane-spanning segment. Topologically, residues 451 to 478 (VEKKLFIHEYISGYYRVSSYFFGKLLSD) are cytoplasmic. The helical transmembrane segment at 479-498 (LLPMRMLPSIIFTCITYFLL) threads the bilayer. The Extracellular portion of the chain corresponds to 499 to 507 (GLKPAVGSF). The chain crosses the membrane as a helical span at residues 508–530 (FIMMFTLMMVAYSASSMALAIAA). Residues 531 to 536 (GQSVVS) are Cytoplasmic-facing. The helical transmembrane segment at 537-557 (VATLLMTISFVFMMIFSGLLV) threads the bilayer. At 558–631 (NLKTVVPWLS…LSAWGLWQNH (74 aa)) the chain is on the extracellular side. Cys-593 and Cys-609 are joined by a disulfide. 2 N-linked (GlcNAc...) asparagine glycosylation sites follow: Asn-597 and Asn-601. A helical transmembrane segment spans residues 632–652 (VALACMMVIFLTIAYLKLLLL). Over 653–656 (KKYS) the chain is Cytoplasmic.

This sequence belongs to the ABC transporter superfamily. ABCG family. Eye pigment precursor importer (TC 3.A.1.204) subfamily. As to quaternary structure, homodimer; disulfide-linked. The minimal functional unit is a homodimer, but the major oligomeric form in plasma membrane is a homotetramer with possibility of higher order oligomerization up to homododecamers. N-glycosylated. Glycosylation-deficient ABCG2 is normally expressed and functional. Post-translationally, phosphorylated. Phosphorylation may regulate the localization to the plasma membrane, the homooligomerization and therefore, the activity of the transporter. As to expression, high expression in brain, kidney and lung. Also expressed in livere, colon, small intestine, heart, skeletal muscle, spleen, stomach and pancreas.

Its subcellular location is the cell membrane. It localises to the apical cell membrane. The protein resides in the mitochondrion membrane. It catalyses the reaction ATP + H2O + xenobioticSide 1 = ADP + phosphate + xenobioticSide 2.. The enzyme catalyses urate(in) + ATP + H2O = urate(out) + ADP + phosphate + H(+). It carries out the reaction indoxyl sulfate(in) + ATP + H2O = indoxyl sulfate(out) + ADP + phosphate + H(+). The catalysed reaction is sphing-4-enine 1-phosphate(in) + ATP + H2O = sphing-4-enine 1-phosphate(out) + ADP + phosphate + H(+). It catalyses the reaction estrone 3-sulfate(in) + ATP + H2O = estrone 3-sulfate(out) + ADP + phosphate + H(+). The enzyme catalyses dehydroepiandrosterone 3-sulfate(in) + ATP + H2O = dehydroepiandrosterone 3-sulfate(out) + ADP + phosphate + H(+). It carries out the reaction 4-methylumbelliferone sulfate(in) + ATP + H2O = 4-methylumbelliferone sulfate(out) + ADP + phosphate + H(+). The catalysed reaction is 5,7-dimethyl-2-methylamino-4-(3-pyridylmethyl)-1,3-benzothiazol-6-yl beta-D-glucuronate(in) + ATP + H2O = 5,7-dimethyl-2-methylamino-4-(3-pyridylmethyl)-1,3-benzothiazol-6-yl beta-D-glucuronate(out) + ADP + phosphate + H(+). It catalyses the reaction 4-methylumbelliferone beta-D-glucuronate(in) + ATP + H2O = 4-methylumbelliferone beta-D-glucuronate(out) + ADP + phosphate + H(+). The enzyme catalyses 5,7-dimethyl-2-methylamino-4-(3-pyridylmethyl)-1,3-benzothiazol-6-yl sulfate(in) + ATP + H2O = 5,7-dimethyl-2-methylamino-4-(3-pyridylmethyl)-1,3-benzothiazol-6-yl sulfate(out) + ADP + phosphate + H(+). It carries out the reaction 17beta-estradiol 17-O-(beta-D-glucuronate)(in) + ATP + H2O = 17beta-estradiol 17-O-(beta-D-glucuronate)(out) + ADP + phosphate + H(+). The catalysed reaction is methotrexate(in) + ATP + H2O = methotrexate(out) + ADP + phosphate + H(+). It catalyses the reaction riboflavin(in) + ATP + H2O = riboflavin(out) + ADP + phosphate + H(+). The enzyme catalyses pheophorbide a(in) + ATP + H2O = pheophorbide a(out) + ADP + phosphate + H(+). It carries out the reaction itaconate(in) + ATP + H2O = itaconate(out) + ADP + phosphate + H(+). Its function is as follows. Broad substrate specificity ATP-dependent transporter of the ATP-binding cassette (ABC) family that actively extrudes a wide variety of physiological compounds, dietary toxins and xenobiotics from cells. Involved in porphyrin homeostasis, mediating the export of protoporphyrin IX (PPIX) from both mitochondria to cytosol and cytosol to extracellular space, it also functions in the cellular export of heme. Also mediates the efflux of sphingosine-1-P from cells. Acts as a urate exporter functioning in both renal and extrarenal urate excretion. In kidney, it also functions as a physiological exporter of the uremic toxin indoxyl sulfate. Also involved in the excretion of steroids like estrone 3-sulfate/E1S, 3beta-sulfooxy-androst-5-en-17-one/DHEAS, and other sulfate conjugates. Mediates the secretion of the riboflavin and biotin vitamins into milk. Extrudes pheophorbide a, a phototoxic porphyrin catabolite of chlorophyll, reducing its bioavailability. Plays an important role in the exclusion of xenobiotics from the brain. It confers to cells a resistance to multiple drugs and other xenobiotics including mitoxantrone, pheophorbide, camptothecin, methotrexate, azidothymidine, and the anthracyclines daunorubicin and doxorubicin, through the control of their efflux. In placenta, it limits the penetration of drugs from the maternal plasma into the fetus. May play a role in early stem cell self-renewal by blocking differentiation. In inflammatory macrophages, exports itaconate from the cytosol to the extracellular compartment and limits the activation of TFEB-dependent lysosome biogenesis involved in antibacterial innate immune response. The chain is Broad substrate specificity ATP-binding cassette transporter ABCG2 (ABCG2) from Sus scrofa (Pig).